Consider the following 490-residue polypeptide: Metal cation symporter ZIP14 (490 aa).

A signal peptide spans 1–28; sequence MELLRPALPSYFLLTLLSIWTAASEARA. Topologically, residues 29–155 are extracellular; the sequence is VSTGMPTISA…PSSVEVWGYG (127 aa). N-linked (GlcNAc...) asparagine glycans are attached at residues Asn-75, Asn-85, and Asn-100. The interval 127 to 146 is disordered; the sequence is ACSSENQENEENEQTEEGRP. A helical transmembrane segment spans residues 156 to 176; that stretch reads LLCVTVISLCSLLGASVVPFM. The Cytoplasmic segment spans residues 177–184; it reads KKTFYKRL. Residues 185 to 205 traverse the membrane as a helical segment; that stretch reads LLYFIALAIGTLYSNALFQLI. The Extracellular segment spans residues 206–222; it reads PEAFGFNPMEDYYVSKS. The helical transmembrane segment at 223–243 threads the bilayer; it reads AVVFGGFYLFFFTEKILKMLL. Residues 244 to 395 lie on the Cytoplasmic side of the membrane; the sequence is KQKNEHHHGH…LLNAGMSLQQ (152 aa). The HHHGHXHX-motif signature appears at 249–256; it reads HHHGHSHY. The short motif at 374–379 is the XEXPHE-motif element; it reads EEFPHE. Residues 396–416 traverse the membrane as a helical segment; sequence ALFFNFLSACCCYVGLGFGIL. Topologically, residues 417-422 are extracellular; that stretch reads AGSHFS. Residues 423-443 form a helical membrane-spanning segment; the sequence is ANWIFALAGGMFLYISLADMF. The Cytoplasmic segment spans residues 444–459; that stretch reads PEMNEVSQEDERKGSA. The helical transmembrane segment at 460–480 threads the bilayer; the sequence is LIPFVIQNLGLLTGFGIMLVL. Over 481 to 490 the chain is Extracellular; it reads TMYSGHIQIG.

It belongs to the ZIP transporter (TC 2.A.5) family. As to quaternary structure, homotrimer. Post-translationally, ubiquitinated. Ubiquitination occurs upon iron depletion. The ubiquitinated form undergoes proteasomal degradation. N-glycosylated. N-glycosylation at Asn-100 is required for iron-regulated extraction of the transporter from membranes and subsequent proteasomal degradation.

It is found in the cell membrane. Its subcellular location is the apical cell membrane. It localises to the basolateral cell membrane. The protein resides in the early endosome membrane. The protein localises to the late endosome membrane. It is found in the lysosome membrane. The catalysed reaction is Zn(2+)(out) + 2 hydrogencarbonate(out) = Zn(2+)(in) + 2 hydrogencarbonate(in). It carries out the reaction Mn(2+)(out) + 2 hydrogencarbonate(out) = Mn(2+)(in) + 2 hydrogencarbonate(in). It catalyses the reaction Fe(2+)(out) + 2 hydrogencarbonate(out) = Fe(2+)(in) + 2 hydrogencarbonate(in). The enzyme catalyses Cd(2+)(out) + 2 hydrogencarbonate(out) = Cd(2+)(in) + 2 hydrogencarbonate(in). Functionally, electroneutral transporter of the plasma membrane mediating the cellular uptake of the divalent metal cations zinc, manganese and iron that are important for tissue homeostasis, metabolism, development and immunity. Functions as an energy-dependent symporter, transporting through the membranes an electroneutral complex composed of a divalent metal cation and two bicarbonate anions. Beside these endogenous cellular substrates, can also import cadmium a non-essential metal which is cytotoxic and carcinogenic. This chain is Metal cation symporter ZIP14, found in Bos taurus (Bovine).